The following is a 428-amino-acid chain: Aspartate--tRNA(Asp) ligase (428 aa).

E166 is an L-aspartate binding site. Positions 188-191 are aspartate; it reads QLYK. R210 lines the L-aspartate pocket. Residues 210–212, 218–220, and E351 contribute to the ATP site; these read RAE and RHL. Positions 351 and 354 each coordinate Mg(2+). L-aspartate-binding residues include S354 and R358. 399-402 contributes to the ATP binding site; sequence GLER.

Belongs to the class-II aminoacyl-tRNA synthetase family. Type 2 subfamily. In terms of assembly, homodimer. Requires Mg(2+) as cofactor.

Its subcellular location is the cytoplasm. It carries out the reaction tRNA(Asp) + L-aspartate + ATP = L-aspartyl-tRNA(Asp) + AMP + diphosphate. Catalyzes the attachment of L-aspartate to tRNA(Asp) in a two-step reaction: L-aspartate is first activated by ATP to form Asp-AMP and then transferred to the acceptor end of tRNA(Asp). The polypeptide is Aspartate--tRNA(Asp) ligase (Thermoplasma acidophilum (strain ATCC 25905 / DSM 1728 / JCM 9062 / NBRC 15155 / AMRC-C165)).